The primary structure comprises 232 residues: MTNADPHELQKFSDLAHRWWDPNAEFKPLHELNPVRLGWIDAHAHLAGKRALDIGCGGGILSESMAGLGAQVKGIDLSTEALGVADLHSLESGVTVDYEAIAAEALAEREPGTYDVVTCMEMLEHVPSPAGIVSACATLVKPGGWVFFSTLNRNLKSYLFAVIGAEYIARMLPKGTHDYARFIRPSELASFVRGTDLHIVEIKGITYHPIGKRFALSNDTDINYLVACRRGA.

S-adenosyl-L-methionine contacts are provided by arginine 36, glycine 55, aspartate 76, and methionine 120.

Belongs to the methyltransferase superfamily. UbiG/COQ3 family.

It catalyses the reaction a 3-demethylubiquinol + S-adenosyl-L-methionine = a ubiquinol + S-adenosyl-L-homocysteine + H(+). The catalysed reaction is a 3-(all-trans-polyprenyl)benzene-1,2-diol + S-adenosyl-L-methionine = a 2-methoxy-6-(all-trans-polyprenyl)phenol + S-adenosyl-L-homocysteine + H(+). It participates in cofactor biosynthesis; ubiquinone biosynthesis. Its function is as follows. O-methyltransferase that catalyzes the 2 O-methylation steps in the ubiquinone biosynthetic pathway. The chain is Ubiquinone biosynthesis O-methyltransferase from Burkholderia ambifaria (strain MC40-6).